Reading from the N-terminus, the 816-residue chain is Glycerol-3-phosphate acyltransferase (816 aa).

Residues 298–303 carry the HXXXXD motif motif; the sequence is CHRSHM.

It belongs to the GPAT/DAPAT family.

It is found in the cell membrane. The catalysed reaction is sn-glycerol 3-phosphate + an acyl-CoA = a 1-acyl-sn-glycero-3-phosphate + CoA. Its pathway is phospholipid metabolism; CDP-diacylglycerol biosynthesis; CDP-diacylglycerol from sn-glycerol 3-phosphate: step 1/3. The polypeptide is Glycerol-3-phosphate acyltransferase (Hamiltonella defensa subsp. Acyrthosiphon pisum (strain 5AT)).